A 172-amino-acid polypeptide reads, in one-letter code: MRLSFAAAISHGRVYRRLGLGPESRIHLLQNLLTGLVRHERIEASWARVDELRGYAEKLIDYGKLGDTNERAMRMADFWLTEKDLIPKLFQVLAPRYQGQNGGYTRMLQIPNRNQQDRAKMAVIEYKGNCLPPLPLPRRDSNLTLLNQLLRGLRQDQEASTRSSHPAQTPEV.

The N-terminal 8 residues, 1–8 (MRLSFAAA), are a transit peptide targeting the mitochondrion.

This sequence belongs to the bacterial ribosomal protein bL17 family. Component of the mitochondrial ribosome large subunit (39S) which comprises a 16S rRNA and about 50 distinct proteins.

Its subcellular location is the mitochondrion. The chain is Large ribosomal subunit protein bL17m (MRPL17) from Bos taurus (Bovine).